A 460-amino-acid chain; its full sequence is Cation efflux system protein CusC (460 aa).

The signal sequence occupies residues Met-1 to Gly-17. A lipid anchor (N-palmitoyl cysteine) is attached at Cys-18. Cys-18 carries S-diacylglycerol cysteine lipidation.

This sequence belongs to the outer membrane factor (OMF) (TC 1.B.17) family. Homotrimer. Component of the cus efflux system composed of CusA, CusB, CusC and CusF.

It localises to the cell outer membrane. Forms pores that allow passive diffusion of cations across the outer membrane. Part of a cation efflux system that mediates resistance to copper and silver. This Escherichia coli O157:H7 protein is Cation efflux system protein CusC (cusC).